Reading from the N-terminus, the 512-residue chain is Cytochrome P450 1A1 (512 aa).

A mitochondrial targeting signal region spans residues 29–40; that stretch reads SRPRVPKGLKNP. The O-linked (GlcNAc) serine glycan is linked to Ser67. Position 224 (Phe224) interacts with substrate. Position 457 (Cys457) interacts with heme.

It belongs to the cytochrome P450 family. Interacts with cytosolic chaperones HSP70 and HSP90; this interaction is required for initial targeting to mitochondria. Interacts (via mitochondrial targeting signal) with TOMM40 (via N-terminus); this interaction is required for translocation across the mitochondrial outer membrane. Requires heme as cofactor.

The protein resides in the endoplasmic reticulum membrane. Its subcellular location is the mitochondrion inner membrane. It is found in the microsome membrane. The protein localises to the cytoplasm. It catalyses the reaction an organic molecule + reduced [NADPH--hemoprotein reductase] + O2 = an alcohol + oxidized [NADPH--hemoprotein reductase] + H2O + H(+). It carries out the reaction estrone + reduced [NADPH--hemoprotein reductase] + O2 = 2-hydroxyestrone + oxidized [NADPH--hemoprotein reductase] + H2O + H(+). The enzyme catalyses estrone + reduced [NADPH--hemoprotein reductase] + O2 = 4-hydroxyestrone + oxidized [NADPH--hemoprotein reductase] + H2O + H(+). The catalysed reaction is estrone + reduced [NADPH--hemoprotein reductase] + O2 = 6alpha-hydroxyestrone + oxidized [NADPH--hemoprotein reductase] + H2O + H(+). It catalyses the reaction estrone + reduced [NADPH--hemoprotein reductase] + O2 = 15alpha-hydroxyestrone + oxidized [NADPH--hemoprotein reductase] + H2O + H(+). It carries out the reaction estrone + reduced [NADPH--hemoprotein reductase] + O2 = 16alpha-hydroxyestrone + oxidized [NADPH--hemoprotein reductase] + H2O + H(+). The enzyme catalyses 17beta-estradiol + reduced [NADPH--hemoprotein reductase] + O2 = 2-hydroxy-17beta-estradiol + oxidized [NADPH--hemoprotein reductase] + H2O + H(+). The catalysed reaction is 17beta-estradiol + reduced [NADPH--hemoprotein reductase] + O2 = 4-hydroxy-17beta-estradiol + oxidized [NADPH--hemoprotein reductase] + H2O + H(+). It catalyses the reaction 17beta-estradiol + reduced [NADPH--hemoprotein reductase] + O2 = 6alpha-hydroxy-17beta-estradiol + oxidized [NADPH--hemoprotein reductase] + H2O + H(+). It carries out the reaction 17beta-estradiol + reduced [NADPH--hemoprotein reductase] + O2 = 7alpha-hydroxy-17beta-estradiol + oxidized [NADPH--hemoprotein reductase] + H2O + H(+). The enzyme catalyses 17beta-estradiol + reduced [NADPH--hemoprotein reductase] + O2 = 15alpha-hydroxy-17beta-estradiol + oxidized [NADPH--hemoprotein reductase] + H2O + H(+). The catalysed reaction is (5Z,8Z,11Z)-eicosatrienoate + reduced [NADPH--hemoprotein reductase] + O2 = 19-hydroxy-(5Z,8Z,11Z)-eicosatrienoate + oxidized [NADPH--hemoprotein reductase] + H2O + H(+). It catalyses the reaction (5Z,8Z,11Z,14Z)-eicosatetraenoate + reduced [NADPH--hemoprotein reductase] + O2 = 16-hydroxy-(5Z,8Z,11Z,14Z)-eicosatetraenoate + oxidized [NADPH--hemoprotein reductase] + H2O + H(+). It carries out the reaction (5Z,8Z,11Z,14Z)-eicosatetraenoate + reduced [NADPH--hemoprotein reductase] + O2 = 17-hydroxy-(5Z,8Z,11Z,14Z)-eicosatetraenoate + oxidized [NADPH--hemoprotein reductase] + H2O + H(+). The enzyme catalyses (5Z,8Z,11Z,14Z)-eicosatetraenoate + reduced [NADPH--hemoprotein reductase] + O2 = 18-hydroxy-(5Z,8Z,11Z,14Z)-eicosatetraenoate + oxidized [NADPH--hemoprotein reductase] + H2O + H(+). The catalysed reaction is (5Z,8Z,11Z,14Z)-eicosatetraenoate + reduced [NADPH--hemoprotein reductase] + O2 = 19-hydroxy-(5Z,8Z,11Z,14Z)-eicosatetraenoate + oxidized [NADPH--hemoprotein reductase] + H2O + H(+). It catalyses the reaction (5Z,8Z,11Z,14Z,17Z)-eicosapentaenoate + reduced [NADPH--hemoprotein reductase] + O2 = 19-hydroxy-(5Z,8Z,11Z,14Z,17Z)-eicosapentaenoate + oxidized [NADPH--hemoprotein reductase] + H2O + H(+). It carries out the reaction (5Z,8Z,11Z,14Z)-eicosatetraenoate + reduced [NADPH--hemoprotein reductase] + O2 = (8R,9S)-epoxy-(5Z,11Z,14Z)-eicosatrienoate + oxidized [NADPH--hemoprotein reductase] + H2O + H(+). The enzyme catalyses (5Z,8Z,11Z,14Z)-eicosatetraenoate + reduced [NADPH--hemoprotein reductase] + O2 = (11R,12S)-epoxy-(5Z,8Z,14Z)-eicosatrienoate + oxidized [NADPH--hemoprotein reductase] + H2O + H(+). The catalysed reaction is (5Z,8Z,11Z,14Z)-eicosatetraenoate + reduced [NADPH--hemoprotein reductase] + O2 = (14S,15R)-epoxy-(5Z,8Z,11Z)-eicosatrienoate + oxidized [NADPH--hemoprotein reductase] + H2O + H(+). It catalyses the reaction (5Z,8Z,11Z,14Z)-eicosatetraenoate + reduced [NADPH--hemoprotein reductase] + O2 = (14R,15S)-epoxy-(5Z,8Z,11Z)-eicosatrienoate + oxidized [NADPH--hemoprotein reductase] + H2O + H(+). It carries out the reaction (5Z,8Z,11Z,14Z,17Z)-eicosapentaenoate + reduced [NADPH--hemoprotein reductase] + O2 = (17R,18S)-epoxy-(5Z,8Z,11Z,14Z)-eicosatetraenoate + oxidized [NADPH--hemoprotein reductase] + H2O + H(+). The enzyme catalyses (4Z,7Z,10Z,13Z,16Z,19Z)-docosahexaenoate + reduced [NADPH--hemoprotein reductase] + O2 = (19S,20R)-epoxy-(4Z,7Z,10Z,13Z,16Z)-docosapentaenoate + oxidized [NADPH--hemoprotein reductase] + H2O + H(+). The catalysed reaction is (4Z,7Z,10Z,13Z,16Z,19Z)-docosahexaenoate + reduced [NADPH--hemoprotein reductase] + O2 = (19R,20S)-epoxy-(4Z,7Z,10Z,13Z,16Z)-docosapentaenoate + oxidized [NADPH--hemoprotein reductase] + H2O + H(+). It catalyses the reaction all-trans-retinol + reduced [NADPH--hemoprotein reductase] + O2 = all-trans-retinal + oxidized [NADPH--hemoprotein reductase] + 2 H2O + H(+). It carries out the reaction all-trans-retinal + reduced [NADPH--hemoprotein reductase] + O2 = all-trans-retinoate + oxidized [NADPH--hemoprotein reductase] + H2O + 2 H(+). The enzyme catalyses (13S)-hydroperoxy-(9Z,11E)-octadecadienoate = 13-oxo-(9Z,11E)-octadecadienoate + H2O. The catalysed reaction is (12S)-hydroperoxy-(5Z,8Z,10E,14Z)-eicosatetraenoate = 12-oxo-(5Z,8Z,10E,14Z)-eicosatetraenoate + H2O. It catalyses the reaction (15S)-hydroperoxy-(5Z,8Z,11Z,13E)-eicosatetraenoate = 15-oxo-(5Z,8Z,11Z,13E)-eicosatetraenoate + H2O. It carries out the reaction (5S)-hydroperoxy-(6E,8Z,11Z,14Z)-eicosatetraenoate = 5-oxo-(6E,8Z,11Z,14Z)-eicosatetraenoate + H2O. The protein operates within steroid hormone biosynthesis. Its pathway is lipid metabolism; fatty acid metabolism. It functions in the pathway cofactor metabolism; retinol metabolism. In terms of biological role, a cytochrome P450 monooxygenase involved in the metabolism of various endogenous substrates, including fatty acids, steroid hormones and vitamins. Mechanistically, uses molecular oxygen inserting one oxygen atom into a substrate, and reducing the second into a water molecule, with two electrons provided by NADPH via cytochrome P450 reductase (CPR; NADPH-ferrihemoprotein reductase). Catalyzes the hydroxylation of carbon-hydrogen bonds. Exhibits high catalytic activity for the formation of hydroxyestrogens from estrone (E1) and 17beta-estradiol (E2), namely 2-hydroxy E1 and E2, as well as D-ring hydroxylated E1 and E2 at the C15alpha and C16alpha positions. Displays different regioselectivities for polyunsaturated fatty acids (PUFA) hydroxylation. Catalyzes the epoxidation of double bonds of certain PUFA. Converts arachidonic acid toward epoxyeicosatrienoic acid (EET) regioisomers, 8,9-, 11,12-, and 14,15-EET, that function as lipid mediators in the vascular system. Displays an absolute stereoselectivity in the epoxidation of eicosapentaenoic acid (EPA) producing the 17(R),18(S) enantiomer. May play an important role in all-trans retinoic acid biosynthesis in extrahepatic tissues. Catalyzes two successive oxidative transformation of all-trans retinol to all-trans retinal and then to the active form all-trans retinoic acid. May also participate in eicosanoids metabolism by converting hydroperoxide species into oxo metabolites (lipoxygenase-like reaction, NADPH-independent). The protein is Cytochrome P450 1A1 (CYP1A1) of Macaca mulatta (Rhesus macaque).